The sequence spans 86 residues: Secreted transmembrane peptide 6 (86 aa).

Positions 1-31 (MGMKSPNIAAFMLPLLLILFTLSSQLKVVES) are cleaved as a signal peptide. Positions 45–58 (IVYTPPSRSCGTSP) match the SCOOP motif motif. A SxS motif essential for MIK2 binding motif is present at residues 51–53 (SRS).

Belongs to the serine rich endogenous peptide (SCOOP) phytocytokine family. In terms of assembly, interacts with MIK2 (via extracellular leucine-rich repeat domain); this interaction triggers the formation of complex between MIK2 and the BAK1/SERK3 and SERK4 coreceptors, and subsequent BAK1 activation by phosphorylation. In terms of tissue distribution, mostly expressed in leaves, and, to a lower extent, in roots, stems, siliques, seeds and flowers.

It localises to the cell membrane. It is found in the secreted. The protein resides in the extracellular space. Its subcellular location is the apoplast. Its function is as follows. Brassicaceae-specific phytocytokine (plant endogenous peptide released into the apoplast) perceived by MIK2 in a BAK1/SERK3 and SERK4 coreceptors-dependent manner, that modulates various physiological and antimicrobial processes including growth prevention and reactive oxygen species (ROS) response regulation. Prevents general growth and development. This Arabidopsis thaliana (Mouse-ear cress) protein is Secreted transmembrane peptide 6.